The following is a 163-amino-acid chain: Thiol peroxidase (163 aa).

The region spanning 16 to 162 (LQVGDTAHDF…YDAAIAAVKN (147 aa)) is the Thioredoxin domain. The active-site Cysteine sulfenic acid (-SOH) intermediate is the Cys-58. Cys-58 and Cys-92 are oxidised to a cystine.

It belongs to the peroxiredoxin family. Tpx subfamily. In terms of assembly, homodimer.

It carries out the reaction a hydroperoxide + [thioredoxin]-dithiol = an alcohol + [thioredoxin]-disulfide + H2O. In terms of biological role, thiol-specific peroxidase that catalyzes the reduction of hydrogen peroxide and organic hydroperoxides to water and alcohols, respectively. Plays a role in cell protection against oxidative stress by detoxifying peroxides. The protein is Thiol peroxidase of Streptococcus gordonii.